We begin with the raw amino-acid sequence, 338 residues long: D-erythrose-4-phosphate dehydrogenase (338 aa).

11–12 lines the NAD(+) pocket; it reads RI. Residues 153-155, R199, 212-213, and R235 contribute to the substrate site; these read SCT and TK. C154 serves as the catalytic Nucleophile. N317 is an NAD(+) binding site.

The protein belongs to the glyceraldehyde-3-phosphate dehydrogenase family. Epd subfamily. As to quaternary structure, homotetramer.

It is found in the cytoplasm. It catalyses the reaction D-erythrose 4-phosphate + NAD(+) + H2O = 4-phospho-D-erythronate + NADH + 2 H(+). The protein operates within cofactor biosynthesis; pyridoxine 5'-phosphate biosynthesis; pyridoxine 5'-phosphate from D-erythrose 4-phosphate: step 1/5. Catalyzes the NAD-dependent conversion of D-erythrose 4-phosphate to 4-phosphoerythronate. This Shewanella baltica (strain OS223) protein is D-erythrose-4-phosphate dehydrogenase.